The sequence spans 292 residues: Coiled-coil domain-containing protein 192 (292 aa).

A disordered region spans residues 28–55 (SVVPESDTSERSSMTSGSSESDIPQENK). A compositionally biased stretch (low complexity) spans 38–49 (RSSMTSGSSESD). Coiled-coil stretches lie at residues 65-174 (QMAF…LATA) and 222-258 (IMELSTQVSLQTERITQLKEVLEEKERKIQQLEAERS). The span at 251–267 (QQLEAERSPHPPQEVKD) shows a compositional bias: basic and acidic residues. The tract at residues 251–292 (QQLEAERSPHPPQEVKDPPGCLPEAPVFSTHDIPPVVSDENL) is disordered.

The chain is Coiled-coil domain-containing protein 192 from Homo sapiens (Human).